The chain runs to 340 residues: Adenosine deaminase (340 aa).

Residues His-15 and His-17 each coordinate Zn(2+). Residues His-17, Asp-19, and Gly-172 each coordinate substrate. His-199 is a binding site for Zn(2+). Glu-202 functions as the Proton donor in the catalytic mechanism. Asp-279 provides a ligand contact to Zn(2+).

The protein belongs to the metallo-dependent hydrolases superfamily. Adenosine and AMP deaminases family. Adenosine deaminase subfamily. It depends on Zn(2+) as a cofactor.

It catalyses the reaction adenosine + H2O + H(+) = inosine + NH4(+). The enzyme catalyses 2'-deoxyadenosine + H2O + H(+) = 2'-deoxyinosine + NH4(+). Catalyzes the hydrolytic deamination of adenosine and 2-deoxyadenosine. The protein is Adenosine deaminase of Streptococcus agalactiae serotype Ia (strain ATCC 27591 / A909 / CDC SS700).